Consider the following 402-residue polypeptide: Phosphoglycerate kinase (402 aa).

Substrate contacts are provided by residues 24 to 26, Arg-39, 62 to 65, Arg-121, and Arg-161; these read DLN and HLGR. ATP contacts are provided by residues Lys-211, Gly-299, Glu-330, and 359–362; that span reads GGDS.

The protein belongs to the phosphoglycerate kinase family. In terms of assembly, monomer.

It is found in the cytoplasm. The catalysed reaction is (2R)-3-phosphoglycerate + ATP = (2R)-3-phospho-glyceroyl phosphate + ADP. The protein operates within carbohydrate degradation; glycolysis; pyruvate from D-glyceraldehyde 3-phosphate: step 2/5. The sequence is that of Phosphoglycerate kinase from Corynebacterium urealyticum (strain ATCC 43042 / DSM 7109).